A 599-amino-acid polypeptide reads, in one-letter code: MTAAPPSPQQIRDRLLQAIDPQSNIRNMVAVQEVISSLEKYPITKEALEETRLGKLINDVRKKTKNEELAKRAKKLLRSWQKLIEPVHQNEAALRGLAGAPGSANGGAHNCRPEAGAAGPPKSVHDLKYRNDMPRLCGQRLDRLGSRKRRGDQRDLGHPGPPPKVSKASHDSLVPNSSPLPTNGISGSPESFPSPLDSSGHVGPEGNRLEHGENDKHSGKIPVNAVRPHTSSPGLGKPPGPCLQTKAVVLQQLDKVDETPGPPHPKGPPRCSLGSRNSRHEGSFARQRSPYTYKGSLPSPSPRPQSLDATQVPSPLPLAQPSTPPVRRLELLPSAESPVRWLEQPEGHQRLAGLGCKAGLPPAEPLLPRAGFSPDSSKADSDAASSGGSDSKKKKRYRPRDYTVNLDGQVAEAGVKPVRLKERKLTFDPMTRQIKPLTQKEPVRADSPVHTEQPRTELDKPEAKASLQSPFEQTNWKELSRNEIIQSYLSRQSSLLSSSGAQTPGAHHFMSEYLKQEESTRRGARKPHVLVPHGPPTDFPGLSREVTRDDLDKIQAHQWPGVNGCQDTQGNWYDWTQCISLDPHGDDGRLNILPYVCLD.

Residues 10 to 87 enclose the TFIIS N-terminal domain; it reads QIRDRLLQAI…RSWQKLIEPV (78 aa). Disordered regions lie at residues 98 to 331, 352 to 403, and 427 to 470; these read AGAP…RLEL, AGLG…RDYT, and FDPM…LQSP. The span at 123–133 shows a compositional bias: basic and acidic residues; sequence SVHDLKYRNDM. Residues 174-191 are compositionally biased toward polar residues; sequence VPNSSPLPTNGISGSPES. Positions 207-218 are enriched in basic and acidic residues; that stretch reads NRLEHGENDKHS. The span at 314 to 324 shows a compositional bias: pro residues; the sequence is SPLPLAQPSTP. Positions 441–463 are enriched in basic and acidic residues; sequence EPVRADSPVHTEQPRTELDKPEA. 2 positions are modified to phosphoserine: S447 and S469.

The protein belongs to the Mediator complex subunit 26 family. In terms of assembly, component of the Mediator complex, which is composed of MED1, MED4, MED6, MED7, MED8, MED9, MED10, MED11, MED12, MED13, MED13L, MED14, MED15, MED16, MED17, MED18, MED19, MED20, MED21, MED22, MED23, MED24, MED25, MED26, MED27, MED29, MED30, MED31, CCNC, CDK8 and CDC2L6/CDK11. The MED12, MED13, CCNC and CDK8 subunits form a distinct module termed the CDK8 module. Mediator containing the CDK8 module is less active than Mediator lacking this module in supporting transcriptional activation. Individual preparations of the Mediator complex lacking one or more distinct subunits have been variously termed ARC, CRSP, DRIP, PC2, SMCC and TRAP. Interacts with CEBPB (when not methylated).

Its subcellular location is the nucleus. In terms of biological role, component of the Mediator complex, a coactivator involved in the regulated transcription of nearly all RNA polymerase II-dependent genes. Mediator functions as a bridge to convey information from gene-specific regulatory proteins to the basal RNA polymerase II transcription machinery. Mediator is recruited to promoters by direct interactions with regulatory proteins and serves as a scaffold for the assembly of a functional pre-initiation complex with RNA polymerase II and the general transcription factors. This chain is Mediator of RNA polymerase II transcription subunit 26 (MED26), found in Bos taurus (Bovine).